A 906-amino-acid polypeptide reads, in one-letter code: Protein translocase subunit SecA (906 aa).

Residues Gln-86, 104–108 (GEGKT), and Asp-499 each bind ATP. Residues 862 to 887 (KPVVSRIDPKDRNPDDPTSWGRVSRN) are disordered. Positions 890, 892, 901, and 902 each coordinate Zn(2+).

The protein belongs to the SecA family. As to quaternary structure, monomer and homodimer. Part of the essential Sec protein translocation apparatus which comprises SecA, SecYEG and auxiliary proteins SecDF-YajC and YidC. Zn(2+) serves as cofactor.

The protein resides in the cell inner membrane. It localises to the cytoplasm. The enzyme catalyses ATP + H2O + cellular proteinSide 1 = ADP + phosphate + cellular proteinSide 2.. Its function is as follows. Part of the Sec protein translocase complex. Interacts with the SecYEG preprotein conducting channel. Has a central role in coupling the hydrolysis of ATP to the transfer of proteins into and across the cell membrane, serving both as a receptor for the preprotein-SecB complex and as an ATP-driven molecular motor driving the stepwise translocation of polypeptide chains across the membrane. In Rickettsia peacockii (strain Rustic), this protein is Protein translocase subunit SecA.